A 317-amino-acid chain; its full sequence is Protoheme IX farnesyltransferase (317 aa).

Transmembrane regions (helical) follow at residues 33–53, 54–74, 117–137, 154–174, 181–201, 242–262, and 285–305; these read VMSLVVFTAFAGLVLAPGEIN, PILGLIAILCIAVGAGASGAL, VILGLAVNWFSAGLLAFTIFF, IVIGGAAGAFPPMLGWACVTG, VILFLIIFLWTPAHFWALALF, FFTGLASAGYGIFAAVLSAIF, and MFAYSVLYLFAIFSGLLADHF.

This sequence belongs to the UbiA prenyltransferase family. Protoheme IX farnesyltransferase subfamily.

It is found in the cell inner membrane. It carries out the reaction heme b + (2E,6E)-farnesyl diphosphate + H2O = Fe(II)-heme o + diphosphate. It functions in the pathway porphyrin-containing compound metabolism; heme O biosynthesis; heme O from protoheme: step 1/1. Its function is as follows. Converts heme B (protoheme IX) to heme O by substitution of the vinyl group on carbon 2 of heme B porphyrin ring with a hydroxyethyl farnesyl side group. In Agrobacterium fabrum (strain C58 / ATCC 33970) (Agrobacterium tumefaciens (strain C58)), this protein is Protoheme IX farnesyltransferase.